The primary structure comprises 943 residues: Sodium- and chloride-dependent GABA transporter ine (943 aa).

The Cytoplasmic portion of the chain corresponds to 1 to 345; the sequence is MAENKDVSQV…RQQHWANKMQ (345 aa). The tract at residues 103–122 is disordered; sequence HKQSPLRHTSVRTRPSSEVL. 3 helical membrane-spanning segments follow: residues 346-366, 373-393, and 418-438; these read FVLA…FPYM, GVFL…LLFM, and GAGL…SVII. At 439–510 the chain is on the extracellular side; it reads GYSIYYFFTS…GLEYPGMMRW (72 aa). N-linked (GlcNAc...) asparagine glycosylation occurs at N476. A run of 9 helical transmembrane segments spans residues 511–531, 539–559, 591–607, 618–638, 679–699, 723–743, 754–774, 799–819, and 836–856; these read ELFA…WKSI, YFTA…AVTL, FNSL…FASY, TVAV…FAFS, WAVM…FAIV, IVVL…IIQG, YAAS…IAWF, CWLV…LINY, and YGIG…YAVI. At 857 to 943 the chain is on the cytoplasmic side; it reads NFLRSSGDTF…HAEAGGPCGQ (87 aa).

This sequence belongs to the sodium:neurotransmitter symporter (SNF) (TC 2.A.22) family. As to expression, expressed both maternally and zygotically. Developing embryos exhibit expression in the posterior hindgut, foregut, midgut, Malpighian tubules, anal plate, Garland cells, and a subset of cells in the central nervous system. Central nervous system expression is seen in segmentally repeating in cells flanking the midline of the ventral ganglion. Isoform A and isoform B are colocalized in both the nervous system and the fluid reabsorption system.

The protein localises to the membrane. Its function is as follows. Plays a role in neuronal membrane excitation, important for normal response properties of the photoreceptor. Able to control excitability from either neurons or glia cells. Ine negatively regulates neuronal sodium channels. Controls neurotransmitter-mediated signaling pathways associated with the structure of the larval peripheral nerve, ine and eag control perineurial glial growth through partially redundant pathways. Isoform A and isoform B are both functional, although isoform A functions with greater efficiency. Has a role in osmolyte transport within the Malpighian tubule and hindgut. The chain is Sodium- and chloride-dependent GABA transporter ine from Drosophila melanogaster (Fruit fly).